Reading from the N-terminus, the 216-residue chain is LexA repressor (216 aa).

The segment at residues 28–48 is a DNA-binding region (H-T-H motif); sequence RAEIAAEFGFSSPNAAEEHLR. Residues Ser-134 and Lys-171 each act as for autocatalytic cleavage activity in the active site.

This sequence belongs to the peptidase S24 family. As to quaternary structure, homodimer.

It carries out the reaction Hydrolysis of Ala-|-Gly bond in repressor LexA.. Represses a number of genes involved in the response to DNA damage (SOS response), including recA and lexA. In the presence of single-stranded DNA, RecA interacts with LexA causing an autocatalytic cleavage which disrupts the DNA-binding part of LexA, leading to derepression of the SOS regulon and eventually DNA repair. The polypeptide is LexA repressor (Ralstonia nicotianae (strain ATCC BAA-1114 / GMI1000) (Ralstonia solanacearum)).